The following is a 257-amino-acid chain: Snake venom serine protease BITS01A (257 aa).

The signal sequence occupies residues Met1–Ala18. Residues Gln19–Leu24 constitute a propeptide that is removed on maturation. Residues Val25–Ala248 enclose the Peptidase S1 domain. 6 disulfides stabilise this stretch: Cys31–Cys162, Cys49–Cys65, Cys97–Cys255, Cys141–Cys209, Cys173–Cys188, and Cys199–Cys224. His64 acts as the Charge relay system in catalysis. Asn101 carries an N-linked (GlcNAc...) asparagine glycan. The active-site Charge relay system is the Asp109. Residues Asn121, Asn153, and Asn169 are each glycosylated (N-linked (GlcNAc...) asparagine). Ser203 serves as the catalytic Charge relay system. Asn210 and Asn250 each carry an N-linked (GlcNAc...) asparagine glycan.

The protein belongs to the peptidase S1 family. Snake venom subfamily. Monomer. In terms of tissue distribution, expressed by the venom gland.

It localises to the secreted. Functionally, snake venom serine protease that may act in the hemostasis system of the prey. The sequence is that of Snake venom serine protease BITS01A from Bothrops insularis (Golden lancehead).